We begin with the raw amino-acid sequence, 283 residues long: Pantothenate synthetase (283 aa).

An ATP-binding site is contributed by 31-38 (MGALHEGH). The active-site Proton donor is the His38. Gln62 serves as a coordination point for (R)-pantoate. Gln62 serves as a coordination point for beta-alanine. Position 148–151 (148–151 (GKKD)) interacts with ATP. Gln154 is a (R)-pantoate binding site. Residues Val177 and 185-188 (RSSR) contribute to the ATP site.

The protein belongs to the pantothenate synthetase family. As to quaternary structure, homodimer.

It localises to the cytoplasm. The catalysed reaction is (R)-pantoate + beta-alanine + ATP = (R)-pantothenate + AMP + diphosphate + H(+). It functions in the pathway cofactor biosynthesis; (R)-pantothenate biosynthesis; (R)-pantothenate from (R)-pantoate and beta-alanine: step 1/1. In terms of biological role, catalyzes the condensation of pantoate with beta-alanine in an ATP-dependent reaction via a pantoyl-adenylate intermediate. In Staphylococcus haemolyticus (strain JCSC1435), this protein is Pantothenate synthetase.